We begin with the raw amino-acid sequence, 296 residues long: Phosphatidylglycerol--prolipoprotein diacylglyceryl transferase (296 aa).

Helical transmembrane passes span 17 to 37 (LAVR…IVVG), 59 to 79 (MMFY…VLFY), and 97 to 117 (GGMS…LFAW). Arginine 142 lines the a 1,2-diacyl-sn-glycero-3-phospho-(1'-sn-glycerol) pocket. The next 2 membrane-spanning stretches (helical) occupy residues 230-250 (MGAI…TVEF) and 265-285 (LSMG…MMIW).

This sequence belongs to the Lgt family.

The protein localises to the cell inner membrane. The enzyme catalyses L-cysteinyl-[prolipoprotein] + a 1,2-diacyl-sn-glycero-3-phospho-(1'-sn-glycerol) = an S-1,2-diacyl-sn-glyceryl-L-cysteinyl-[prolipoprotein] + sn-glycerol 1-phosphate + H(+). It functions in the pathway protein modification; lipoprotein biosynthesis (diacylglyceryl transfer). Functionally, catalyzes the transfer of the diacylglyceryl group from phosphatidylglycerol to the sulfhydryl group of the N-terminal cysteine of a prolipoprotein, the first step in the formation of mature lipoproteins. This Burkholderia mallei (strain NCTC 10247) protein is Phosphatidylglycerol--prolipoprotein diacylglyceryl transferase.